The chain runs to 652 residues: Putative enzymatic polyprotein (652 aa).

The region spanning 21 to 99 (YHGLFDTGAN…SPDIIIGATF (79 aa)) is the Peptidase A2 domain. Residue aspartate 26 is part of the active site. Residues 231–413 (FIEEKTNFED…EKIDFLGVQI (183 aa)) enclose the Reverse transcriptase domain. Residues aspartate 301, aspartate 364, and aspartate 365 each coordinate Mg(2+).

It catalyses the reaction DNA(n) + a 2'-deoxyribonucleoside 5'-triphosphate = DNA(n+1) + diphosphate. It carries out the reaction Endonucleolytic cleavage to 5'-phosphomonoester.. Functionally, encodes for at least two polypeptides: protease (PR) and reverse transcriptase (RT). The protease processes the polyprotein in cis. Reverse transcriptase is multifunctional enzyme that converts the viral RNA genome into dsDNA in viral cytoplasmic capsids. This enzyme displays a DNA polymerase activity that can copy either DNA or RNA templates, and a ribonuclease H (RNase H) activity that cleaves the RNA strand of RNA-DNA heteroduplexes in a partially processive 3'- to 5'-endonucleasic mode. Neo-synthesized pregenomic RNA (pgRNA) are encapsidated, and reverse-transcribed inside the nucleocapsid. Partial (+)DNA is synthesized from the (-)DNA template and generates the relaxed circular DNA (RC-DNA) genome. After budding and infection, the RC-DNA migrates in the nucleus, and is converted into a plasmid-like covalently closed circular DNA (cccDNA). The chain is Putative enzymatic polyprotein from Cassava vein mosaic virus (CsVMV).